We begin with the raw amino-acid sequence, 539 residues long: MKALTATLLVGTALAAVPPQQPIQVPTEDSAWAKPLENLKDTFKTLGNDAKQAWNELASAFPDAINEYTLFSAPKKHTRRPDTHWDHIVRGSDVQSIWVEGADGQKRREVDGKLEKYDLRVKAVDPSKLGIDKVKQYSGYLDDKENDKHLFYWFFESRNDPKNDPVVLWLNGGPGCSSLTGLFLELGPASIDKNLKVVHNPYSWNSNASVIFLDQPVNVGFSYSGGSVSDTIAAGKDVYALLTLFFKQFPQYATQDFHIAGESYAGHYIPVFASEILSHKNRNINLQSVLIGNGLTDPLTQYPHYRPMACGEGGYPAVLDESTCRSMDNSLPRCLSMIESCYSSESAWLCVPASIYCNNAMIGPYQRTGQNPYDVRAKCEDGGSLCYSQLGYITEWLNQKSVMDALGVEVSSYDSCNMDINRNFLFHGDWMKPFHRVVPGLIDQIRVLIYAGDADFICNWLGNQAWTDALEWSGREKFAKAELKDLTIVDNENKGKNIGKVKSYGNFTFMRLFGGGHMVPLDQPEASLEFFNRWLGGEW.

The first 17 residues, 1–17 (MKALTATLLVGTALAAV), serve as a signal peptide directing secretion. A propeptide spanning residues 18-122 (PPQQPIQVPT…KLEKYDLRVK (105 aa)) is cleaved from the precursor. 5 disulfides stabilise this stretch: Cys176/Cys416, Cys310/Cys324, Cys334/Cys357, Cys341/Cys350, and Cys379/Cys386. N-linked (GlcNAc...) asparagine glycosylation occurs at Asn207. Residue Ser263 is part of the active site. Residue Asp455 is part of the active site. Asn506 carries an N-linked (GlcNAc...) asparagine glycan. His517 is an active-site residue.

It belongs to the peptidase S10 family.

The protein localises to the vacuole. The catalysed reaction is Release of a C-terminal amino acid with broad specificity.. Functionally, vacuolar carboxypeptidase involved in degradation of small peptides. Digests preferentially peptides containing an aliphatic or hydrophobic residue in P1' position, as well as methionine, leucine or phenylalanine in P1 position of ester substrate. In Coccidioides posadasii (strain C735) (Valley fever fungus), this protein is Carboxypeptidase Y homolog A (cpyA).